The following is a 571-amino-acid chain: Urease subunit alpha (571 aa).

The Urease domain occupies 132–571; sequence GGIDAHIHFI…VALAQRYFLF (440 aa). Ni(2+)-binding residues include His-137, His-139, and Lys-220. Lys-220 carries the post-translational modification N6-carboxylysine. His-222 serves as a coordination point for substrate. Ni(2+) contacts are provided by His-249 and His-275. His-323 (proton donor) is an active-site residue. Asp-363 is a Ni(2+) binding site.

This sequence belongs to the metallo-dependent hydrolases superfamily. Urease alpha subunit family. Heterotrimer of UreA (gamma), UreB (beta) and UreC (alpha) subunits. Three heterotrimers associate to form the active enzyme. The cofactor is Ni cation. Carboxylation allows a single lysine to coordinate two nickel ions.

It is found in the cytoplasm. The enzyme catalyses urea + 2 H2O + H(+) = hydrogencarbonate + 2 NH4(+). The protein operates within nitrogen metabolism; urea degradation; CO(2) and NH(3) from urea (urease route): step 1/1. In Halalkalibacterium halodurans (strain ATCC BAA-125 / DSM 18197 / FERM 7344 / JCM 9153 / C-125) (Bacillus halodurans), this protein is Urease subunit alpha.